Here is a 269-residue protein sequence, read N- to C-terminus: Signal recognition particle SEC65 subunit (269 aa).

2 disordered regions span residues 30-65 (RTPI…DKSV) and 236-269 (PMTK…KIRG). Residues 248 to 258 (QPQVKAPQAPK) are compositionally biased toward low complexity. The span at 259–269 (QPKKKVMKIRG) shows a compositional bias: basic residues.

The protein belongs to the SRP19 family. As to quaternary structure, fungal signal recognition particle consists of a 7S RNA molecule (scR1) and at least six protein subunits: SRP72, SRP68, SRP54, SEC65, SRP21 andSRP14.

It localises to the cytoplasm. Its function is as follows. Signal-recognition-particle assembly has a crucial role in targeting secretory proteins to the rough endoplasmic reticulum membrane. It must be involved intimately in the translocation of a wide variety of protein substrates. This Debaryomyces hansenii (strain ATCC 36239 / CBS 767 / BCRC 21394 / JCM 1990 / NBRC 0083 / IGC 2968) (Yeast) protein is Signal recognition particle SEC65 subunit (SEC65).